Reading from the N-terminus, the 141-residue chain is VLSSKDKANVKTAFGKIGGHAADYGAEALERMFLGFPTTKTYFPHFDLSHGSAQVKAHGKKVGDALTKAADHLDDLPSALSALSDLHAHKLRVDPVNFKLLSHCLLVTVAAHHPGDFTPAVHASLDKFLTNVSTVLTSKYR.

The Globin domain maps to 1 to 141 (VLSSKDKANV…VSTVLTSKYR (141 aa)). Serine 3 carries the post-translational modification Phosphoserine. Residues lysine 7 and lysine 11 each carry the N6-succinyllysine modification. An N6-acetyllysine; alternate modification is found at lysine 16. The residue at position 16 (lysine 16) is an N6-succinyllysine; alternate. The residue at position 24 (tyrosine 24) is a Phosphotyrosine. Lysine 40 carries the post-translational modification N6-succinyllysine. A Phosphoserine modification is found at serine 49. O2 is bound at residue histidine 58. Histidine 87 contacts heme b. Serine 102 carries the phosphoserine modification. At threonine 108 the chain carries Phosphothreonine. The residue at position 124 (serine 124) is a Phosphoserine. 2 positions are modified to phosphothreonine: threonine 134 and threonine 137. The residue at position 138 (serine 138) is a Phosphoserine.

The protein belongs to the globin family. Heterotetramer of two alpha chains and two beta chains. Red blood cells.

Its function is as follows. Involved in oxygen transport from the lung to the various peripheral tissues. Hemopressin acts as an antagonist peptide of the cannabinoid receptor CNR1. Hemopressin-binding efficiently blocks cannabinoid receptor CNR1 and subsequent signaling. This chain is Hemoglobin subunit alpha (HBA), found in Lama vicugna (Vicugna).